The chain runs to 146 residues: MSGKIIDKVKVFMGFDVFEDEEVEEEETVEIEDELVPVMNSKRNKVVNIHTTTQMKVVLYEPTNFEEAPNIVDNLKNRKPVIINLENIEPDLAKKFFDFLNGAIYALDGNIQKVSSGIFILAPNNVDISGNIKEELKNKGVFPWQK.

The protein belongs to the SepF family. In terms of assembly, homodimer. Interacts with FtsZ.

It is found in the cytoplasm. Functionally, cell division protein that is part of the divisome complex and is recruited early to the Z-ring. Probably stimulates Z-ring formation, perhaps through the cross-linking of FtsZ protofilaments. Its function overlaps with FtsA. This chain is Cell division protein SepF, found in Alkaliphilus oremlandii (strain OhILAs) (Clostridium oremlandii (strain OhILAs)).